We begin with the raw amino-acid sequence, 484 residues long: MTKPIRVRYAPSPTGLLHIGNARTALFNYLFARHHGGTFLIRIEDTDRKRHVEDGERSQLENLRWLGIDWDESPETHENYRQSERLDIYQKYVDQLLAEGKAYKSYVTEEELAAERERQEAAGETPRYINEYLGMSEDEKTAYIAEREAAGIVPTVRLAVNEAGIYKWNDIVKGEIEFEGGNIGGDWVIQKRDGYPTYNFAVVIDDYLMKISHVIRGDDHIANTPKQLMVYEALGWEAPEFGHMTLIINSETGKKLSKRDTNTLQFIEDYRRKGYMPEAVFNFIGLLGWNPGGEEEIFSREQFIQLFDENRLSKSPAAFDQKKMDWMSNEYIKNADLETIFNLAKPFLEEAGRLTDKAEKLVELYKPQMSSADEIVGLTDLFFSDFPELTAEEKEVMAGETVPTVLNALKEKLEAMTDEDFQPDNIFPQIKAVQKETGIKGKNLFMPIRIAVSGEMHGPELPNTIYLLGREKSIQHIDNMLKSL.

Positions 11–21 (PSPTGLLHIGN) match the 'HIGH' region motif. The short motif at 255–259 (KLSKR) is the 'KMSKS' region element. Lys258 contributes to the ATP binding site.

It belongs to the class-I aminoacyl-tRNA synthetase family. Glutamate--tRNA ligase type 1 subfamily. As to quaternary structure, monomer.

It is found in the cytoplasm. It catalyses the reaction tRNA(Glu) + L-glutamate + ATP = L-glutamyl-tRNA(Glu) + AMP + diphosphate. Functionally, catalyzes the attachment of glutamate to tRNA(Glu) in a two-step reaction: glutamate is first activated by ATP to form Glu-AMP and then transferred to the acceptor end of tRNA(Glu). The sequence is that of Glutamate--tRNA ligase from Streptococcus suis (strain 98HAH33).